The primary structure comprises 200 residues: Snake venom metalloproteinase hemorrhagic factor 2 (200 aa).

The region spanning 4–200 (KYIELVVVAD…RKPQCILNKP (197 aa)) is the Peptidase M12B domain. Glu7 serves as a coordination point for Ca(2+). An N-linked (GlcNAc...) asparagine glycan is attached at Asn70. Asp91 serves as a coordination point for Ca(2+). Cystine bridges form between Cys115/Cys195, Cys155/Cys179, and Cys157/Cys162. Residue His140 participates in Zn(2+) binding. Glu141 is a catalytic residue. Zn(2+) is bound by residues His144 and His150. Ca(2+) contacts are provided by Cys195 and Asn198.

The protein belongs to the venom metalloproteinase (M12B) family. P-I subfamily. As to quaternary structure, monomer. Requires Zn(2+) as cofactor. Expressed by the venom gland.

The protein resides in the secreted. Functionally, snake venom zinc metalloproteinase that induces weak hemorrhage and mild myonecrosis. Shows mild myotoxicity by killing myocytes. Also induces edema in the mouse footpad at doses where hemorrhage is absent. In vitro, degrades laminin, fibronectin, and type IV collagen, suggesting this toxin play a role in local tissue damage by degrading extracellular matrix, and possibly by degrading muscle extracellular matrix. Hemorrhage is not due to cytotoxicity towards endothelial cells in culture, and may only play a minor role in local bleeding characteristic of L.muta envenomations. Also induces the synthesis of several endogenous matrix metalloproteinases, which in turn, may participate in extracellular matrix degradation. The sequence is that of Snake venom metalloproteinase hemorrhagic factor 2 from Lachesis muta muta (Bushmaster).